A 176-amino-acid polypeptide reads, in one-letter code: MSRRILGIDPGSLITGFGVIDVVGNQRHYVASGAIRTKSGSPLAERVKVLVDGIHQVIDTYRPTEAALERVFVNVNPAATLMLGQARGACMTALVLKDLPVAEYTALQVKQSVVGQGKAPKEQVQYMVVRMLNLSGTPQADAADALAVALTHANHSGGAIGKLALRGLKVRGGRLV.

Residues Asp9, Glu69, and Asp141 contribute to the active site. The Mg(2+) site is built by Asp9, Glu69, and Asp141.

This sequence belongs to the RuvC family. As to quaternary structure, homodimer which binds Holliday junction (HJ) DNA. The HJ becomes 2-fold symmetrical on binding to RuvC with unstacked arms; it has a different conformation from HJ DNA in complex with RuvA. In the full resolvosome a probable DNA-RuvA(4)-RuvB(12)-RuvC(2) complex forms which resolves the HJ. Mg(2+) is required as a cofactor.

Its subcellular location is the cytoplasm. It catalyses the reaction Endonucleolytic cleavage at a junction such as a reciprocal single-stranded crossover between two homologous DNA duplexes (Holliday junction).. In terms of biological role, the RuvA-RuvB-RuvC complex processes Holliday junction (HJ) DNA during genetic recombination and DNA repair. Endonuclease that resolves HJ intermediates. Cleaves cruciform DNA by making single-stranded nicks across the HJ at symmetrical positions within the homologous arms, yielding a 5'-phosphate and a 3'-hydroxyl group; requires a central core of homology in the junction. The consensus cleavage sequence is 5'-(A/T)TT(C/G)-3'. Cleavage occurs on the 3'-side of the TT dinucleotide at the point of strand exchange. HJ branch migration catalyzed by RuvA-RuvB allows RuvC to scan DNA until it finds its consensus sequence, where it cleaves and resolves the cruciform DNA. This is Crossover junction endodeoxyribonuclease RuvC from Chromobacterium violaceum (strain ATCC 12472 / DSM 30191 / JCM 1249 / CCUG 213 / NBRC 12614 / NCIMB 9131 / NCTC 9757 / MK).